A 137-amino-acid polypeptide reads, in one-letter code: Small heat shock protein IbpA (137 aa).

In terms of domain architecture, sHSP spans 28–137 (SQSNGGYPPY…AKKPRRIEIN (110 aa)).

This sequence belongs to the small heat shock protein (HSP20) family. In terms of assembly, monomer. Forms homomultimers of about 100-150 subunits at optimal growth temperatures. Conformation changes to monomers at high temperatures or high ionic concentrations.

The protein localises to the cytoplasm. Functionally, associates with aggregated proteins, together with IbpB, to stabilize and protect them from irreversible denaturation and extensive proteolysis during heat shock and oxidative stress. Aggregated proteins bound to the IbpAB complex are more efficiently refolded and reactivated by the ATP-dependent chaperone systems ClpB and DnaK/DnaJ/GrpE. Its activity is ATP-independent. This is Small heat shock protein IbpA from Shigella sonnei (strain Ss046).